A 330-amino-acid polypeptide reads, in one-letter code: MMKTVFFGTPDFAVPTLEALLGHPDIDVLAVVSQPDRRRGRGSKLIPSPVKEVAVQAGIPVWQPERVKRCQETLAKLKNCQADFFVVVAYGQLLSPEILVMPRLGCVNVHGSLLPKYRGAAPLQWAIANGETETGVTTMLMDEGMDTGAMLLKTTTPIGLMDNLTAIGDRLARSGAELLVQTLKDLDAGQLQPIPQTETEATYAPLLKKGDFVINWHRSALEIHNQVRGFAPACHTAWGEQILKIISTVPLGAEFFPLLPEKYQDLATAYLNYSLEAGEPGNIIGTIKNWGPVLETGNGHLLLEQVQPPGKKPQSGWDFINGNRSTISFA.

112 to 115 (SLLP) is a (6S)-5,6,7,8-tetrahydrofolate binding site.

It belongs to the Fmt family.

It carries out the reaction L-methionyl-tRNA(fMet) + (6R)-10-formyltetrahydrofolate = N-formyl-L-methionyl-tRNA(fMet) + (6S)-5,6,7,8-tetrahydrofolate + H(+). Attaches a formyl group to the free amino group of methionyl-tRNA(fMet). The formyl group appears to play a dual role in the initiator identity of N-formylmethionyl-tRNA by promoting its recognition by IF2 and preventing the misappropriation of this tRNA by the elongation apparatus. This is Methionyl-tRNA formyltransferase from Synechocystis sp. (strain ATCC 27184 / PCC 6803 / Kazusa).